The primary structure comprises 752 residues: MAAKTARSKATPTKENGVRVEEGLSLFKSDKFDADAYVQSKCSINEKDIKQLCSYLLDLKRASAEEMRRSVYANYPAFIRTSKEISDLEGELSSIRNLLSTQATLIHGLADGVNIDDDKVSDESLANGLLNFEDNGLSDLEKWATEFPDHLDALLAERRVDEALAAFDEGEILVSQANEKHTLSSSVLSSLQFAIAERKQKLADQLAKAACQPSTRGGELRSAIAALKRLGDGPRAHTVLLDAHFQRYQYNMQSLRPSSTSYGGAYTAALSQLVFSAISQASSDSLGIFGKEPAYSSELVTWATKQTEAFSLLVKRHALASSAAAGGLRAAAECAQIALGHCSLLEARGLSLCPVLLKHFKPIVEQALEANLKRIEENTAAMAAADDWVLTSPPAGSRHASTAFQNKLTSSAHRFNLMVQDFFEDVGPLLSMQLGSKALEGLFRVFNSYVDVLVRALPGSIEEEDPNFESSCNKIVQMAETEANQLALLANASLLADELLPRAAMKLSLDQTGQRTDDLRRPLDRQNRNPEQREWKRRLLSTVDKLKDAFCRQHALDLIFTEEGDSHLSADMYVNIDENGEDVDFFPSLIFQELFAKLNRMASLAADMFVGRERFAISLLMRLTETVILWLSGDQSFWDDIEEGPRPLGPLGLRQLYLDMKFVICFASQGRYLSRNLHRGTNEIISKALAAFTATGIDPYSELPEDDWFNDICVDAMERLSGKTKGNNGDVHSPTASVSAQSVSSARSHGSY.

Disordered stretches follow at residues 511-532 (QTGQ…NPEQ) and 724-752 (TKGN…HGSY). Basic and acidic residues predominate over residues 515–532 (RTDDLRRPLDRQNRNPEQ). Over residues 733–752 (SPTASVSAQSVSSARSHGSY) the composition is skewed to low complexity.

It belongs to the EXO84 family. In terms of assembly, the exocyst complex is composed of SEC3, SEC5, SEC6, SEC8, SEC10, EXO70A1 and EXO84B. Interacts with SEC6, SEC10, SEC15B and EXO70A1. Interacts with EXO70B1. Binds directly to B1L.

The protein localises to the cytoplasm. It is found in the cytosol. It localises to the perinuclear region. The protein resides in the cytoskeleton. Its subcellular location is the phragmoplast. The protein localises to the secreted. It is found in the cell wall. It localises to the cell membrane. Component of the exocyst complex involved in the docking of exocytic vesicles with fusion sites on the plasma membrane during regulated or polarized secretion. Involved in polarized cell growth and organ morphogenesis. During cytokinesis, involved in cell plate initiation, cell plate maturation and formation of new primary cell wall. Probable component of an exocyst subcomplex specifically involved in autophagy-related, Golgi-independent membrane traffic to the vacuole. Regulates autophagosome formation and autophagy-related Golgi-independent import into the vacuole. Mediates ABCG36/PEN3 outer-membrane polarity at the periphery of lateral root cap and root epidermal cells. The chain is Exocyst complex component EXO84B from Arabidopsis thaliana (Mouse-ear cress).